A 206-amino-acid polypeptide reads, in one-letter code: Peptidyl-tRNA hydrolase (206 aa).

A tRNA-binding site is contributed by Tyr-19. The active-site Proton acceptor is His-24. Residues Tyr-70, Asn-72, and Asn-118 each contribute to the tRNA site.

It belongs to the PTH family. Monomer.

It is found in the cytoplasm. The catalysed reaction is an N-acyl-L-alpha-aminoacyl-tRNA + H2O = an N-acyl-L-amino acid + a tRNA + H(+). In terms of biological role, hydrolyzes ribosome-free peptidyl-tRNAs (with 1 or more amino acids incorporated), which drop off the ribosome during protein synthesis, or as a result of ribosome stalling. Functionally, catalyzes the release of premature peptidyl moieties from peptidyl-tRNA molecules trapped in stalled 50S ribosomal subunits, and thus maintains levels of free tRNAs and 50S ribosomes. In Prochlorococcus marinus (strain MIT 9303), this protein is Peptidyl-tRNA hydrolase.